A 77-amino-acid polypeptide reads, in one-letter code: Small ribosomal subunit protein bS18 (77 aa).

Belongs to the bacterial ribosomal protein bS18 family. Part of the 30S ribosomal subunit. Forms a tight heterodimer with protein bS6.

Its function is as follows. Binds as a heterodimer with protein bS6 to the central domain of the 16S rRNA, where it helps stabilize the platform of the 30S subunit. The sequence is that of Small ribosomal subunit protein bS18 from Bacillus cytotoxicus (strain DSM 22905 / CIP 110041 / 391-98 / NVH 391-98).